A 504-amino-acid polypeptide reads, in one-letter code: Cytochrome P450 3A16 (504 aa).

Heme is bound at residue C443.

The protein belongs to the cytochrome P450 family. It depends on heme as a cofactor.

The protein localises to the endoplasmic reticulum membrane. Its subcellular location is the microsome membrane. It catalyses the reaction an organic molecule + reduced [NADPH--hemoprotein reductase] + O2 = an alcohol + oxidized [NADPH--hemoprotein reductase] + H2O + H(+). Functionally, cytochromes P450 are a group of heme-thiolate monooxygenases. In liver microsomes, this enzyme is involved in an NADPH-dependent electron transport pathway. It oxidizes a variety of structurally unrelated compounds, including steroids, fatty acids, and xenobiotics. This Mus musculus (Mouse) protein is Cytochrome P450 3A16 (Cyp3a16).